The following is a 133-amino-acid chain: Holo-[acyl-carrier-protein] synthase (133 aa).

Positions 8 and 57 each coordinate Mg(2+).

Belongs to the P-Pant transferase superfamily. AcpS family. Requires Mg(2+) as cofactor.

The protein resides in the cytoplasm. It carries out the reaction apo-[ACP] + CoA = holo-[ACP] + adenosine 3',5'-bisphosphate + H(+). Functionally, transfers the 4'-phosphopantetheine moiety from coenzyme A to a Ser of acyl-carrier-protein. The polypeptide is Holo-[acyl-carrier-protein] synthase (Bartonella henselae (strain ATCC 49882 / DSM 28221 / CCUG 30454 / Houston 1) (Rochalimaea henselae)).